The chain runs to 447 residues: NADH-ubiquinone oxidoreductase chain 4 (447 aa).

A run of 13 helical transmembrane segments spans residues 28-48 (IFLLTFMFMINLSSLNYFNYI), 56-76 (MVSYGLILLSFWICGLMLMAS), 89-109 (FVFMILFLLFMLVLTFSSMSV), 110-130 (FMFYLFFEASLIPTLFLILGW), 141-161 (VYLLFYTLLASLPLLIGIFYI), 183-203 (LLYLSLVFAFLVKMPMFLVHL), 213-233 (PVSGSMILAGILLKLGGYGLL), 246-266 (YNYWWISISLVGGVLISLVCL), 273-293 (ALIAYSSVAHMGIVLSGLLTM), 298-318 (LTGSYALMIAHGLCSSGLFCL), 331-351 (LLINKGLLNFMPTLSLWWFLL), 374-394 (IVSWSWITMIMLSFLSFFSAA), and 409-431 (YSGVYFFSVGTTREFLLLMLHWL).

This sequence belongs to the complex I subunit 4 family.

Its subcellular location is the mitochondrion membrane. It carries out the reaction a ubiquinone + NADH + 5 H(+)(in) = a ubiquinol + NAD(+) + 4 H(+)(out). Its function is as follows. Core subunit of the mitochondrial membrane respiratory chain NADH dehydrogenase (Complex I) that is believed to belong to the minimal assembly required for catalysis. Complex I functions in the transfer of electrons from NADH to the respiratory chain. The immediate electron acceptor for the enzyme is believed to be ubiquinone. In Anopheles gambiae (African malaria mosquito), this protein is NADH-ubiquinone oxidoreductase chain 4 (mt:ND4).